The chain runs to 1248 residues: Structural maintenance of chromosomes protein 1B (1248 aa).

32 to 39 (GPNGSGKS) contributes to the ATP binding site. A coiled-coil region spans residues 163 to 502 (EFIGEYEAKK…EGKRQQKRAE (340 aa)). An SMC hinge domain is found at 514 to 629 (SVFGRLLDLC…ETVEEARHIA (116 aa)). K648, K713, and K1032 each carry N6-acetyllysine. Residues 666–912 (WDEKELHNLR…REVGKLQKEV (247 aa)) are a coiled coil. Residues 1219–1228 (PDTEDQEGSR) are compositionally biased toward basic and acidic residues. Residues 1219-1248 (PDTEDQEGSRSHRKPRVPRVSMSPKSPQSR) form a disordered region.

This sequence belongs to the SMC family. SMC1 subfamily. As to quaternary structure, forms a heterodimer with SMC3. Component of a meiosis-specific cohesin complex, probably composed of the SMC1B and SMC3 heterodimer attached via their SMC hinge domain, RAD21 (or its meiosis-specific related protein REC8), which link them, and STAG3, which interacts with RAD21 or REC8. The cohesin complex interacts with the cohesin loading complex subunits NIPBL/Scc2 (via HEAT repeats) and MAU2/Scc4. NIPBL directly contacts all members of the complex, RAD21, SMC1A/B, SMC3 and STAG1. Spermatocytes (at protein level). Testis and ovary specific. Not expressed in somatic cells.

It is found in the nucleus. The protein localises to the chromosome. Its subcellular location is the centromere. Functionally, meiosis-specific component of cohesin complex. Required for the maintenance of meiotic cohesion, but not, or only to a minor extent, for its establishment. Contributes to axial element (AE) formation and the organization of chromatin loops along the AE. Plays a key role in synapsis, recombination and chromosome movements. The cohesin complex is required for the cohesion of sister chromatids after DNA replication. The cohesin complex apparently forms a large proteinaceous ring within which sister chromatids can be trapped. At anaphase, the complex is cleaved and dissociates from chromatin, allowing sister chromatids to segregate. The meiosis-specific cohesin complex probably replaces mitosis specific cohesin complex when it dissociates from chromatin during prophase I. This Mus musculus (Mouse) protein is Structural maintenance of chromosomes protein 1B (Smc1b).